The sequence spans 340 residues: UDP-3-O-acylglucosamine N-acyltransferase (340 aa).

His-238 acts as the Proton acceptor in catalysis.

The protein belongs to the transferase hexapeptide repeat family. LpxD subfamily. Homotrimer.

The enzyme catalyses a UDP-3-O-[(3R)-3-hydroxyacyl]-alpha-D-glucosamine + a (3R)-hydroxyacyl-[ACP] = a UDP-2-N,3-O-bis[(3R)-3-hydroxyacyl]-alpha-D-glucosamine + holo-[ACP] + H(+). The protein operates within bacterial outer membrane biogenesis; LPS lipid A biosynthesis. Functionally, catalyzes the N-acylation of UDP-3-O-acylglucosamine using 3-hydroxyacyl-ACP as the acyl donor. Is involved in the biosynthesis of lipid A, a phosphorylated glycolipid that anchors the lipopolysaccharide to the outer membrane of the cell. This chain is UDP-3-O-acylglucosamine N-acyltransferase, found in Shewanella frigidimarina (strain NCIMB 400).